A 44-amino-acid chain; its full sequence is MESLLLARLPEAYVVFSPIVDVLPIIPVFFLLLAFVWQAAIGFR.

A propeptide spanning residues 1-7 (MESLLLA) is cleaved from the precursor. Residues 23–43 (LPIIPVFFLLLAFVWQAAIGF) form a helical membrane-spanning segment.

This sequence belongs to the PsbK family. In terms of assembly, PSII is composed of 1 copy each of membrane proteins PsbA, PsbB, PsbC, PsbD, PsbE, PsbF, PsbH, PsbI, PsbJ, PsbK, PsbL, PsbM, PsbT, PsbX, PsbY, PsbZ, Psb30/Ycf12, at least 3 peripheral proteins of the oxygen-evolving complex and a large number of cofactors. It forms dimeric complexes.

It localises to the plastid. The protein localises to the chloroplast thylakoid membrane. Its function is as follows. One of the components of the core complex of photosystem II (PSII). PSII is a light-driven water:plastoquinone oxidoreductase that uses light energy to abstract electrons from H(2)O, generating O(2) and a proton gradient subsequently used for ATP formation. It consists of a core antenna complex that captures photons, and an electron transfer chain that converts photonic excitation into a charge separation. The sequence is that of Photosystem II reaction center protein K from Trieres chinensis (Marine centric diatom).